Here is a 154-residue protein sequence, read N- to C-terminus: Interleukin-2 (154 aa).

The N-terminal stretch at 1-20 (MYKLQLLSCIALTLALVANS) is a signal peptide. Residue T23 is glycosylated (O-linked (GalNAc...) threonine). C78 and C126 are oxidised to a cystine.

Belongs to the IL-2 family.

The protein resides in the secreted. Cytokine produced by activated CD4-positive helper T-cells and to a lesser extend activated CD8-positive T-cells and natural killer (NK) cells that plays pivotal roles in the immune response and tolerance. Binds to a receptor complex composed of either the high-affinity trimeric IL-2R (IL2RA/CD25, IL2RB/CD122 and IL2RG/CD132) or the low-affinity dimeric IL-2R (IL2RB and IL2RG). Interaction with the receptor leads to oligomerization and conformation changes in the IL-2R subunits resulting in downstream signaling starting with phosphorylation of JAK1 and JAK3. In turn, JAK1 and JAK3 phosphorylate the receptor to form a docking site leading to the phosphorylation of several substrates including STAT5. This process leads to activation of several pathways including STAT, phosphoinositide-3-kinase/PI3K and mitogen-activated protein kinase/MAPK pathways. Functions as a T-cell growth factor and can increase NK-cell cytolytic activity as well. Promotes strong proliferation of activated B-cells and subsequently immunoglobulin production. Plays a pivotal role in regulating the adaptive immune system by controlling the survival and proliferation of regulatory T-cells, which are required for the maintenance of immune tolerance. Moreover, participates in the differentiation and homeostasis of effector T-cell subsets, including Th1, Th2, Th17 as well as memory CD8-positive T-cells. This Lama glama (Llama) protein is Interleukin-2 (IL2).